The primary structure comprises 247 residues: Caffeoyl-CoA O-methyltransferase 2 (247 aa).

Residue lysine 21 participates in substrate binding. Residues threonine 63, glutamate 85, 87-88, serine 93, aspartate 111, and alanine 140 contribute to the S-adenosyl-L-methionine site; that span reads GV. Aspartate 163 provides a ligand contact to substrate. Residue aspartate 163 participates in a divalent metal cation binding. Aspartate 165 provides a ligand contact to S-adenosyl-L-methionine. Residues aspartate 189 and asparagine 190 each contribute to the a divalent metal cation site. Residue asparagine 194 coordinates substrate.

It belongs to the class I-like SAM-binding methyltransferase superfamily. Cation-dependent O-methyltransferase family. CCoAMT subfamily. It depends on a divalent metal cation as a cofactor.

The catalysed reaction is (E)-caffeoyl-CoA + S-adenosyl-L-methionine = (E)-feruloyl-CoA + S-adenosyl-L-homocysteine + H(+). Its pathway is aromatic compound metabolism; phenylpropanoid biosynthesis. In terms of biological role, methylates caffeoyl-CoA to feruloyl-CoA and 5-hydroxyferuloyl-CoA to sinapoyl-CoA. Plays a role in the synthesis of feruloylated polysaccharides. Involved in the reinforcement of the plant cell wall. Also involved in the responding to wounding or pathogen challenge by the increased formation of cell wall-bound ferulic acid polymers. The polypeptide is Caffeoyl-CoA O-methyltransferase 2 (CCOAOMT2) (Eucalyptus globulus (Tasmanian blue gum)).